The chain runs to 51 residues: Large ribosomal subunit protein bL33 (51 aa).

The tract at residues 1 to 23 is disordered; it reads MREKIKLESSAGTGHFYTTTKNK. Polar residues predominate over residues 10-20; it reads SAGTGHFYTTT.

This sequence belongs to the bacterial ribosomal protein bL33 family.

This Methylobacillus flagellatus (strain ATCC 51484 / DSM 6875 / VKM B-1610 / KT) protein is Large ribosomal subunit protein bL33.